The primary structure comprises 336 residues: HTH-type transcriptional regulator AscG (336 aa).

Positions 2–56 (TTMLEVAKRAGVSKATVSRVLSGNGYVSQETKDRVFQAVEESGYRPNLLARNLSA) constitute an HTH lacI-type domain. A DNA-binding region (H-T-H motif) is located at residues 4–23 (MLEVAKRAGVSKATVSRVLS).

Functionally, repressor of the asc operon. The cryptic operon is activated by the insertion of IS186 into the ascG gene. The protein is HTH-type transcriptional regulator AscG (ascG) of Escherichia coli (strain K12).